Reading from the N-terminus, the 456-residue chain is Adenylosuccinate synthetase isozyme 2 (456 aa).

The disordered stretch occupies residues M1 to R24. Residues G39–K45 and G67–T69 contribute to the GTP site. D40 serves as the catalytic Proton acceptor. Mg(2+) is bound by residues D40 and G67. Substrate is bound at residue D40. IMP-binding positions include D40–K43, N65–H68, T162, R176, N255, T270, and R334. H68 acts as the Proton donor in catalysis. V330 to R336 contributes to the substrate binding site. GTP contacts are provided by residues R336, K362 to D364, and G444 to K447.

The protein belongs to the adenylosuccinate synthetase family. In terms of assembly, homodimer. Mg(2+) is required as a cofactor.

Its subcellular location is the cytoplasm. It is found in the mitochondrion. It catalyses the reaction IMP + L-aspartate + GTP = N(6)-(1,2-dicarboxyethyl)-AMP + GDP + phosphate + 2 H(+). The protein operates within purine metabolism; AMP biosynthesis via de novo pathway; AMP from IMP: step 1/2. Its activity is regulated as follows. Inhibited competitively by AMP and IMP and non-competitively by fructose 1,6-bisphosphate. In terms of biological role, plays an important role in the de novo pathway and in the salvage pathway of purine nucleotide biosynthesis. Catalyzes the first committed step in the biosynthesis of AMP from IMP. The polypeptide is Adenylosuccinate synthetase isozyme 2 (Homo sapiens (Human)).